Here is a 69-residue protein sequence, read N- to C-terminus: Large ribosomal subunit protein uL29 (69 aa).

Belongs to the universal ribosomal protein uL29 family.

In Methylobacillus flagellatus (strain ATCC 51484 / DSM 6875 / VKM B-1610 / KT), this protein is Large ribosomal subunit protein uL29.